A 389-amino-acid chain; its full sequence is S-adenosylmethionine synthase (389 aa).

Histidine 15 contributes to the ATP binding site. Aspartate 17 lines the Mg(2+) pocket. Glutamate 43 is a binding site for K(+). L-methionine is bound by residues glutamate 56 and glutamine 99. The tract at residues 99 to 109 is flexible loop; the sequence is QSPDIAQGVNE. ATP contacts are provided by residues 166 to 168, 234 to 235, aspartate 243, 249 to 250, alanine 266, and lysine 270; these read DAK, RF, and RK. Aspartate 243 lines the L-methionine pocket. Lysine 274 contributes to the L-methionine binding site.

Belongs to the AdoMet synthase family. Homotetramer; dimer of dimers. The cofactor is Mg(2+). Requires K(+) as cofactor.

The protein localises to the cytoplasm. It catalyses the reaction L-methionine + ATP + H2O = S-adenosyl-L-methionine + phosphate + diphosphate. It participates in amino-acid biosynthesis; S-adenosyl-L-methionine biosynthesis; S-adenosyl-L-methionine from L-methionine: step 1/1. Its function is as follows. Catalyzes the formation of S-adenosylmethionine (AdoMet) from methionine and ATP. The overall synthetic reaction is composed of two sequential steps, AdoMet formation and the subsequent tripolyphosphate hydrolysis which occurs prior to release of AdoMet from the enzyme. This is S-adenosylmethionine synthase from Neisseria meningitidis serogroup B (strain ATCC BAA-335 / MC58).